The primary structure comprises 83 residues: Cell division topological specificity factor (83 aa).

It belongs to the MinE family.

Prevents the cell division inhibition by proteins MinC and MinD at internal division sites while permitting inhibition at polar sites. This ensures cell division at the proper site by restricting the formation of a division septum at the midpoint of the long axis of the cell. This is Cell division topological specificity factor from Bordetella parapertussis (strain 12822 / ATCC BAA-587 / NCTC 13253).